The sequence spans 204 residues: uncharacterized protein (204 aa).

Positions 1-20 are disordered; that stretch reads MQNPLPEVMSPEHDKRTTTP.

This is an uncharacterized protein from Frog virus 3 (isolate Goorha) (FV-3).